We begin with the raw amino-acid sequence, 388 residues long: Probable protein phosphatase 2C 43 (388 aa).

A PPM-type phosphatase domain is found at 53–352 (EFSFAVVQAN…DDITVVVVFI (300 aa)). Asp-84, Gly-85, Asp-284, and Asp-343 together coordinate Mn(2+).

The protein belongs to the PP2C family. The cofactor is Mg(2+). It depends on Mn(2+) as a cofactor.

The enzyme catalyses O-phospho-L-seryl-[protein] + H2O = L-seryl-[protein] + phosphate. It catalyses the reaction O-phospho-L-threonyl-[protein] + H2O = L-threonyl-[protein] + phosphate. The protein is Probable protein phosphatase 2C 43 of Oryza sativa subsp. japonica (Rice).